Here is a 132-residue protein sequence, read N- to C-terminus: Aspartate 1-decarboxylase (132 aa).

S25 (schiff-base intermediate with substrate; via pyruvic acid) is an active-site residue. S25 is subject to Pyruvic acid (Ser). A substrate-binding site is contributed by T57. Y58 (proton donor) is an active-site residue. 73-75 (GAA) serves as a coordination point for substrate.

The protein belongs to the PanD family. Heterooctamer of four alpha and four beta subunits. The cofactor is pyruvate. In terms of processing, is synthesized initially as an inactive proenzyme, which is activated by self-cleavage at a specific serine bond to produce a beta-subunit with a hydroxyl group at its C-terminus and an alpha-subunit with a pyruvoyl group at its N-terminus.

Its subcellular location is the cytoplasm. The catalysed reaction is L-aspartate + H(+) = beta-alanine + CO2. The protein operates within cofactor biosynthesis; (R)-pantothenate biosynthesis; beta-alanine from L-aspartate: step 1/1. Catalyzes the pyruvoyl-dependent decarboxylation of aspartate to produce beta-alanine. This Heliobacterium modesticaldum (strain ATCC 51547 / Ice1) protein is Aspartate 1-decarboxylase.